A 118-amino-acid chain; its full sequence is Small ribosomal subunit protein uS13 (118 aa).

Residues 94–118 (GLPLRGQRTKTNARTRKGPRKPIKK) are disordered.

This sequence belongs to the universal ribosomal protein uS13 family. Part of the 30S ribosomal subunit. Forms a loose heterodimer with protein S19. Forms two bridges to the 50S subunit in the 70S ribosome.

Located at the top of the head of the 30S subunit, it contacts several helices of the 16S rRNA. In the 70S ribosome it contacts the 23S rRNA (bridge B1a) and protein L5 of the 50S subunit (bridge B1b), connecting the 2 subunits; these bridges are implicated in subunit movement. Contacts the tRNAs in the A and P-sites. This is Small ribosomal subunit protein uS13 from Cellvibrio japonicus (strain Ueda107) (Pseudomonas fluorescens subsp. cellulosa).